Reading from the N-terminus, the 590-residue chain is Probable lysine-specific demethylase 4B (590 aa).

In terms of domain architecture, JmjN spans 9–51 (IKVFRPTWEEFKDFPKYVAYMESQGAHKAGLAKVVPPPEWVPR). 2-oxoglutarate is bound at residue Y130. The JmjC domain occupies 140-306 (DTDQDSWNIN…YGKRAVQCTC (167 aa)). The Fe cation site is built by H186 and E188. Positions 196 and 204 each coordinate 2-oxoglutarate. 2 residues coordinate Zn(2+): C232 and H238. K239 lines the 2-oxoglutarate pocket. H274 contacts Fe cation. Residues C304 and C306 each coordinate Zn(2+). Disordered stretches follow at residues 372 to 395 (PTKA…QNPN) and 417 to 590 (ATDE…TASP). The span at 445-458 (EYIDDGTEDDDEEE) shows a compositional bias: acidic residues. The segment covering 480–494 (SKRKTNSRNNRGRSP) has biased composition (basic residues). 2 stretches are compositionally biased toward low complexity: residues 502 to 513 (ISPASSTSSTSR) and 537 to 571 (TTSP…TPPA).

Belongs to the JHDM3 histone demethylase family. Fe(2+) is required as a cofactor.

It localises to the nucleus. The catalysed reaction is N(6),N(6),N(6)-trimethyl-L-lysyl(9)-[histone H3] + 2 2-oxoglutarate + 2 O2 = N(6)-methyl-L-lysyl(9)-[histone H3] + 2 formaldehyde + 2 succinate + 2 CO2. In terms of biological role, probable histone demethylase that specifically demethylates 'Lys-9' and 'Lys-36' residues of histone H3, thereby playing a central role in histone code. Demethylation of Lys residue generates formaldehyde and succinate. The chain is Probable lysine-specific demethylase 4B (Kdm4B) from Drosophila melanogaster (Fruit fly).